The following is a 355-amino-acid chain: Beta-ketoacyl-[acyl-carrier-protein] synthase III (355 aa).

Residues Cys122 and His280 contribute to the active site. Positions 281-285 (QANMR) are ACP-binding. Asn311 is an active-site residue.

It belongs to the thiolase-like superfamily. FabH family. In terms of assembly, homodimer.

It localises to the cytoplasm. The enzyme catalyses malonyl-[ACP] + acetyl-CoA + H(+) = 3-oxobutanoyl-[ACP] + CO2 + CoA. The protein operates within lipid metabolism; fatty acid biosynthesis. Functionally, catalyzes the condensation reaction of fatty acid synthesis by the addition to an acyl acceptor of two carbons from malonyl-ACP. Catalyzes the first condensation reaction which initiates fatty acid synthesis and may therefore play a role in governing the total rate of fatty acid production. Possesses both acetoacetyl-ACP synthase and acetyl transacylase activities. Its substrate specificity determines the biosynthesis of branched-chain and/or straight-chain of fatty acids. This chain is Beta-ketoacyl-[acyl-carrier-protein] synthase III, found in Kocuria rhizophila (strain ATCC 9341 / DSM 348 / NBRC 103217 / DC2201).